A 388-amino-acid chain; its full sequence is Formate-dependent phosphoribosylglycinamide formyltransferase (388 aa).

N(1)-(5-phospho-beta-D-ribosyl)glycinamide is bound by residues Glu-20–Leu-21 and Glu-80. ATP-binding positions include Arg-112, Lys-153, Ser-158–Gln-163, Glu-193–Ile-196, and Glu-201. The 190-residue stretch at Arg-117–Leu-306 folds into the ATP-grasp domain. Residues Glu-265 and Glu-277 each coordinate Mg(2+). N(1)-(5-phospho-beta-D-ribosyl)glycinamide is bound by residues Asp-284, Lys-352, and Arg-359–Arg-360.

The protein belongs to the PurK/PurT family. Homodimer.

It catalyses the reaction N(1)-(5-phospho-beta-D-ribosyl)glycinamide + formate + ATP = N(2)-formyl-N(1)-(5-phospho-beta-D-ribosyl)glycinamide + ADP + phosphate + H(+). It participates in purine metabolism; IMP biosynthesis via de novo pathway; N(2)-formyl-N(1)-(5-phospho-D-ribosyl)glycinamide from N(1)-(5-phospho-D-ribosyl)glycinamide (formate route): step 1/1. Involved in the de novo purine biosynthesis. Catalyzes the transfer of formate to 5-phospho-ribosyl-glycinamide (GAR), producing 5-phospho-ribosyl-N-formylglycinamide (FGAR). Formate is provided by PurU via hydrolysis of 10-formyl-tetrahydrofolate. This chain is Formate-dependent phosphoribosylglycinamide formyltransferase, found in Methanococcus maripaludis (strain DSM 14266 / JCM 13030 / NBRC 101832 / S2 / LL).